The following is a 502-amino-acid chain: UDP-glucuronosyltransferase 2C1 (502 aa).

Asn-177 and Asn-288 each carry an N-linked (GlcNAc...) asparagine glycan. The chain crosses the membrane as a helical span at residues 466–481 (VVVFLLTCVATIIFLA).

Belongs to the UDP-glycosyltransferase family.

The protein resides in the microsome membrane. Its subcellular location is the endoplasmic reticulum membrane. It carries out the reaction glucuronate acceptor + UDP-alpha-D-glucuronate = acceptor beta-D-glucuronoside + UDP + H(+). Its function is as follows. UDPGT is of major importance in the conjugation and subsequent elimination of potentially toxic xenobiotics and endogenous compounds. The sequence is that of UDP-glucuronosyltransferase 2C1 (UGT2C1) from Oryctolagus cuniculus (Rabbit).